The chain runs to 449 residues: C4-dicarboxylate transport protein (449 aa).

Transmembrane regions (helical) follow at residues 5–25, 45–65, 77–97, 149–169, 185–205, 231–251, 298–318, 332–352, and 353–373; these read AVFKSLYFQVLVAIAIGVSLG, LIKMIIAPIIFCTIVVGIAGM, LAVLYFEVVSTIALVIGLIVV, GDMLQVLFFSILFGYAMHSFG, VLFGIVGVIMKVAPIGAFGAM, CVIFILGVLGSIAAFHGFSII, GYSFNLDGTSIYLTMAAVFIA, TLLVILLLTSKGAAGVTGSGF, and IVLAATLSAVGTVPVAGLALI.

This sequence belongs to the dicarboxylate/amino acid:cation symporter (DAACS) (TC 2.A.23) family.

The protein localises to the cell inner membrane. Functionally, responsible for the transport of dicarboxylates such as succinate, fumarate, and malate from the periplasm across the membrane. This chain is C4-dicarboxylate transport protein, found in Dechloromonas aromatica (strain RCB).